Consider the following 391-residue polypeptide: Phosphoglycerate kinase (391 aa).

Substrate contacts are provided by residues 21 to 23 (DLN), arginine 36, 59 to 62 (HLGR), arginine 113, and arginine 146. ATP-binding positions include lysine 197, glutamate 319, and 345–348 (GGDT).

This sequence belongs to the phosphoglycerate kinase family. As to quaternary structure, monomer.

It is found in the cytoplasm. The catalysed reaction is (2R)-3-phosphoglycerate + ATP = (2R)-3-phospho-glyceroyl phosphate + ADP. Its pathway is carbohydrate degradation; glycolysis; pyruvate from D-glyceraldehyde 3-phosphate: step 2/5. The sequence is that of Phosphoglycerate kinase from Colwellia psychrerythraea (strain 34H / ATCC BAA-681) (Vibrio psychroerythus).